A 466-amino-acid polypeptide reads, in one-letter code: Dihydrolipoyl dehydrogenase (466 aa).

FAD is bound by residues 34-42 (ERVHLGGIC), K51, and G114. C42 and C47 are oxidised to a cystine. Residues 180–184 (GSGAI), E203, and 269–272 (AIGV) contribute to the NAD(+) site. Residues D311 and A319 each contribute to the FAD site. The active-site Proton acceptor is the H445.

It belongs to the class-I pyridine nucleotide-disulfide oxidoreductase family. Homodimer. It depends on FAD as a cofactor.

It is found in the cytoplasm. The catalysed reaction is N(6)-[(R)-dihydrolipoyl]-L-lysyl-[protein] + NAD(+) = N(6)-[(R)-lipoyl]-L-lysyl-[protein] + NADH + H(+). In terms of biological role, lipoamide dehydrogenase is a component of the alpha-ketoacid dehydrogenase complexes. The protein is Dihydrolipoyl dehydrogenase (lpd) of Zymomonas mobilis subsp. mobilis (strain ATCC 31821 / ZM4 / CP4).